The following is a 161-amino-acid chain: Allophycocyanin beta chain (161 aa).

Asn-71 bears the N4-methylasparagine mark. Cys-81 contributes to the (2R,3E)-phycocyanobilin binding site.

The protein belongs to the phycobiliprotein family. As to quaternary structure, heterodimer of an alpha and a beta chain. In terms of processing, contains one covalently linked phycocyanobilin chromophore.

The protein localises to the plastid. The protein resides in the chloroplast thylakoid membrane. Its function is as follows. Light-harvesting photosynthetic bile pigment-protein from the phycobiliprotein complex. Allophycocyanin has a maximum absorption at approximately 650 nanometers. In Aglaothamnion neglectum (Red alga), this protein is Allophycocyanin beta chain (apcB).